The chain runs to 1051 residues: Probable valine--tRNA ligase, mitochondrial (1051 aa).

Residues M1–Y20 constitute a mitochondrion transit peptide. A 'HIGH' region motif is present at residues P71 to H81. Positions K606 to S610 match the 'KMSKS' region motif. K609 provides a ligand contact to ATP. A coiled-coil region spans residues K972–N1019.

It belongs to the class-I aminoacyl-tRNA synthetase family.

Its subcellular location is the mitochondrion. The enzyme catalyses tRNA(Val) + L-valine + ATP = L-valyl-tRNA(Val) + AMP + diphosphate. The protein is Probable valine--tRNA ligase, mitochondrial (valS2) of Dictyostelium discoideum (Social amoeba).